A 1171-amino-acid chain; its full sequence is ATP-dependent helicase/deoxyribonuclease subunit B (1171 aa).

Positions 1–343 (MSLRFVIGRA…LVADENYRYR (343 aa)) constitute a UvrD-like helicase ATP-binding domain. ATP is bound at residue 8–15 (GRAGSGKS). A UvrD-like helicase C-terminal domain is found at 281–587 (MEQPRFHSPA…QFANIPPSLD (307 aa)). Residues Cys-805, Cys-1129, Cys-1132, and Cys-1138 each contribute to the [4Fe-4S] cluster site.

This sequence belongs to the helicase family. AddB/RexB type 1 subfamily. In terms of assembly, heterodimer of AddA and AddB. Mg(2+) serves as cofactor. Requires [4Fe-4S] cluster as cofactor.

The heterodimer acts as both an ATP-dependent DNA helicase and an ATP-dependent, dual-direction single-stranded exonuclease. Recognizes the chi site generating a DNA molecule suitable for the initiation of homologous recombination. The AddB subunit has 5' -&gt; 3' nuclease activity but not helicase activity. This chain is ATP-dependent helicase/deoxyribonuclease subunit B, found in Bacillus cereus (strain AH187).